A 336-amino-acid polypeptide reads, in one-letter code: Probable aquaglyceroporin-2 (336 aa).

Positions 1–46 (MPISTINDSISESSVHKSSIPTKVEMSQNEKYSEAPSEAPTIPPPP) are disordered. The Cytoplasmic segment spans residues 1-64 (MPISTINDSI…RENCQDAFSE (64 aa)). Residues 9 to 19 (SISESSVHKSS) are compositionally biased toward low complexity. Residues 65–85 (FFGTFVLLLFGDGVVAQVVLS) form a helical membrane-spanning segment. Residues 86–94 (RGTKGDYQS) lie on the Extracellular side of the membrane. A helical transmembrane segment spans residues 95–115 (ISWGWGLGVMLGVYVGGKSGG). Residues 116–135 (HLNPAVTLANCLFRGHPWRK) lie on the Cytoplasmic side of the membrane. An NPA 1 motif is present at residues 118 to 120 (NPA). A helical membrane pass occupies residues 136–156 (FPIYAVAQVLGAMAAAAVVYG). Residues 157-195 (NYKSAIDAYEGGPGIRTVIGENATAGVFCTYPAEFMTRT) are Extracellular-facing. A glycan (N-linked (GlcNAc...) asparagine) is linked at Asn178. Residues 196 to 216 (GMFFSEFIASTILQFVIFAMA) traverse the membrane as a helical segment. At 217–223 (DSANIGA) the chain is on the cytoplasmic side. A helical membrane pass occupies residues 224–244 (GPLMPLGLFFLIFGIGACFGW). Topologically, residues 245–280 (ETGYAINLARDFGPRLVSYMLGYGSEVWSAGGYYFW) are extracellular. Residues 251 to 253 (NLA) carry the NPA 2 motif. A helical transmembrane segment spans residues 281–301 (IPMVAPFFGCAFGGFLYDVFI). Residues 302–336 (YTGPSPINTPGMGFGRLVSPRRSTWSNTYNANSPV) are Cytoplasmic-facing.

The protein belongs to the MIP/aquaporin (TC 1.A.8) family.

It localises to the membrane. The catalysed reaction is H2O(in) = H2O(out). It carries out the reaction glycerol(in) = glycerol(out). In terms of biological role, probable water/glycerol channel that may have redundant functions with FgAQP4. The polypeptide is Probable aquaglyceroporin-2 (Gibberella zeae (strain ATCC MYA-4620 / CBS 123657 / FGSC 9075 / NRRL 31084 / PH-1) (Wheat head blight fungus)).